Reading from the N-terminus, the 142-residue chain is Hemoglobin subunit alpha-1 (142 aa).

Positions 2–142 (VLSPADKTNI…VSTVLTSKYR (141 aa)) constitute a Globin domain. His-59 is a binding site for O2. His-88 is a binding site for heme b.

It belongs to the globin family. As to quaternary structure, heterotetramer of two alpha chains and two beta chains. Red blood cells.

Its function is as follows. Involved in oxygen transport from the lung to the various peripheral tissues. The chain is Hemoglobin subunit alpha-1 from Arctocephalus galapagoensis (Galapagoes fur seal).